Here is a 907-residue protein sequence, read N- to C-terminus: Leucine-rich repeat-containing G-protein coupled receptor 5 (907 aa).

A signal peptide spans 1–21 (MDTSCVHMLLSLLALLQLVAA). At 22–561 (GSSPGPDAIP…EHLFGSWLIR (540 aa)) the chain is on the extracellular side. Positions 25 to 66 (PGPDAIPRGCPSHCHCELDGRMLLRVDCSDLGLSELPSNLSV) constitute an LRRNT domain. Intrachain disulfides connect C34–C40 and C38–C52. Residues N63 and N77 are each glycosylated (N-linked (GlcNAc...) asparagine). 16 LRR repeats span residues 67-88 (FTSY…LLHR), 91-112 (FLEE…AFTG), 115-136 (SLKV…ALQN), 139-160 (SLQS…CFSG), 163-184 (SLRH…AFRS), 187-208 (ALQA…AFGN), 211-232 (SLVV…CFDG), 235-256 (SLET…IKTL), 258-279 (NLKE…AFVG), 282-303 (SLIT…AFQH), 306-325 (ELRT…PHLT), 329-350 (TLES…VCDQ), 353-374 (NLQV…SGCQ), 375-396 (KLQK…TFQQ), 399-420 (NLRS…AFST), and 423-446 (SLIK…HGLT). The N-linked (GlcNAc...) asparagine glycan is linked to N208. C348 and C373 form a disulfide bridge. C479 and C541 are disulfide-bonded. A helical membrane pass occupies residues 562 to 582 (IGVWTTAVLALSCNALVALTV). Residues 583-593 (FRTPLYISSIK) lie on the Cytoplasmic side of the membrane. Residues 594 to 614 (LLIGVIAVVDILMGVSSAVLA) form a helical membrane-spanning segment. Over 615-638 (AVDAFTFGRFAQHGAWWEDGIGCQ) the chain is Extracellular. Cysteines 637 and 712 form a disulfide. A helical membrane pass occupies residues 639-659 (IVGFLSIFASESSIFLLTLAA). The Cytoplasmic segment spans residues 660-682 (LERGFSVKCSSKFEVKAPLFSLR). A helical transmembrane segment spans residues 683–703 (AIVLLCVLLALTIATIPLLGG). The Extracellular segment spans residues 704-723 (SKYNASPLCLPLPFGEPSTT). A helical membrane pass occupies residues 724–744 (GYMVALVLLNSLCFLIMTIAY). Over 745–767 (TKLYCSLEKGELENLWDCSMVKH) the chain is Cytoplasmic. The chain crosses the membrane as a helical span at residues 768 to 788 (IALLLFANCILYCPVAFLSFS). Over 789–802 (SLLNLTFISPDVIK) the chain is Extracellular. The N-linked (GlcNAc...) asparagine glycan is linked to N792. The chain crosses the membrane as a helical span at residues 803-823 (FILLVIVPLPSCLNPLLYIVF). The Cytoplasmic portion of the chain corresponds to 824–907 (NPHFKEDMGS…LSSVAFVPCL (84 aa)).

Belongs to the G-protein coupled receptor 1 family. Identified in a complex composed of RNF43, LGR5 and RSPO1. Also interacts with other R-spondin ligands, including RSPO2, RSPO3 and RSPO4. As to expression, expressed in the intestinal epithelium (at protein level). Expressed in the gonads, the adrenal gland, and in the brain. In the central nervous system expression is restricted to the olfactory bulb. In the adrenal gland detected only in the neural-crest derived chromaffin cells of the medulla, but not in the cells of the adrenal cortex. In the gonads, the expression is high in Graafian follicle, but absent from primary and secondary follicles. In the intestine, exclusively expressed in cycling crypt base columnar cells. Expressed in the lower bulge and secondary germ area of telogen hair follicles and in the lower outer root sheath of anagen hair follicle.

The protein resides in the cell membrane. The protein localises to the golgi apparatus. It localises to the trans-Golgi network membrane. Functionally, receptor for R-spondins that potentiates the canonical Wnt signaling pathway and acts as a stem cell marker of the intestinal epithelium and the hair follicle. Upon binding to R-spondins (RSPO1, RSPO2, RSPO3 or RSPO4), associates with phosphorylated LRP6 and frizzled receptors that are activated by extracellular Wnt receptors, triggering the canonical Wnt signaling pathway to increase expression of target genes. In contrast to classical G-protein coupled receptors, does not activate heterotrimeric G-proteins to transduce the signal. Involved in the development and/or maintenance of the adult intestinal stem cells during postembryonic development. This is Leucine-rich repeat-containing G-protein coupled receptor 5 (Lgr5) from Mus musculus (Mouse).